Here is a 585-residue protein sequence, read N- to C-terminus: Putative ABC transporter ATP-binding protein MG187 (585 aa).

Positions 8-468 (IELKNIVVDF…PANEFVARFL (461 aa)) constitute an ABC transporter domain. 40–47 (GPSGCGKT) is an ATP binding site.

The protein belongs to the ABC transporter superfamily.

The sequence is that of Putative ABC transporter ATP-binding protein MG187 from Mycoplasma genitalium (strain ATCC 33530 / DSM 19775 / NCTC 10195 / G37) (Mycoplasmoides genitalium).